Reading from the N-terminus, the 256-residue chain is Imidazole glycerol phosphate synthase subunit HisF (256 aa).

Catalysis depends on residues Asp11 and Asp130.

Belongs to the HisA/HisF family. As to quaternary structure, heterodimer of HisH and HisF.

Its subcellular location is the cytoplasm. It carries out the reaction 5-[(5-phospho-1-deoxy-D-ribulos-1-ylimino)methylamino]-1-(5-phospho-beta-D-ribosyl)imidazole-4-carboxamide + L-glutamine = D-erythro-1-(imidazol-4-yl)glycerol 3-phosphate + 5-amino-1-(5-phospho-beta-D-ribosyl)imidazole-4-carboxamide + L-glutamate + H(+). It participates in amino-acid biosynthesis; L-histidine biosynthesis; L-histidine from 5-phospho-alpha-D-ribose 1-diphosphate: step 5/9. Functionally, IGPS catalyzes the conversion of PRFAR and glutamine to IGP, AICAR and glutamate. The HisF subunit catalyzes the cyclization activity that produces IGP and AICAR from PRFAR using the ammonia provided by the HisH subunit. The polypeptide is Imidazole glycerol phosphate synthase subunit HisF (Prochlorococcus marinus (strain NATL2A)).